The sequence spans 2439 residues: Mucin-6 (2439 aa).

Residues 1–22 form the signal peptide; that stretch reads MVQRWLLLSCCGALLSAGLANT. Residues 43–214 enclose the VWFD 1 domain; it reads GQCSTWGAGH…KLDDPGEICT (172 aa). Disulfide bonds link Cys-45-Cys-176 and Cys-67-Cys-213. N-linked (GlcNAc...) asparagine glycosylation occurs at Asn-268. The 56-residue stretch at 302–357 folds into the TIL domain; the sequence is CPANQVYQECGSACVKTCSNPQHSCSSSCTFGCFCPEGTVLNDLSNNHTCVPVTQC. In terms of domain architecture, VWFD 2 spans 395–579; the sequence is GHCSLEGGSF…ALERETDPCS (185 aa). Disulfide bonds link Cys-397-Cys-533 and Cys-419-Cys-578. 2 N-linked (GlcNAc...) asparagine glycosylation sites follow: Asn-486 and Asn-659. A VWFD 3 domain is found at 866–1038; the sequence is STCTLYGEGH…NSWKESPLCG (173 aa). 4 cysteine pairs are disulfide-bonded: Cys-868/Cys-1002, Cys-890/Cys-1037, Cys-899/Cys-999, and Cys-917/Cys-924. N-linked (GlcNAc...) asparagine glycans are attached at residues Asn-975 and Asn-1179. 8 disordered regions span residues 1202 to 1455, 1471 to 1626, 1642 to 1834, 1868 to 1983, 2033 to 2077, 2090 to 2196, 2233 to 2278, and 2323 to 2348; these read PQPP…TSLV, ATSA…LVTP, SASI…HPHT, SIHS…STGP, ATSA…THSS, SSSW…SASP, VSPT…SLTT, and LTAH…SPGV. Positions 1224–1265 are enriched in low complexity; that stretch reads TGTSTTIGLLSSTGPSPSSNHTPASPTQTPLLPATLTSSKPT. Residues 1276-1286 are compositionally biased toward polar residues; that stretch reads TAVTPQATSGL. Positions 1294–1339 are enriched in low complexity; that stretch reads STATKPTVTQATTRATASTASPATTSTAQSTTRTTMTLPTPATSGT. Positions 1340-1351 are enriched in polar residues; that stretch reads SPTLPKSTNQEL. Low complexity-rich tracts occupy residues 1352-1373 and 1381-1415; these read PGTT…TGPT and TRPT…AGSP. Composition is skewed to polar residues over residues 1416–1455, 1471–1481, and 1490–1520; these read VPST…TSLV, ATSASNHSAPT, and LKAT…STNK. Low complexity-rich tracts occupy residues 1521-1567 and 1574-1611; these read TPTS…ATSS and TTHS…PQTT. Residues 1561–1738 form a 1; truncated repeat; the sequence is TNSATSSRPP…TTSGTSQSRS (178 aa). Positions 1607-1953 are approximate repeats; it reads HPQTTLPTHV…STGTRTPVAH (347 aa). Over residues 1659 to 1686 the composition is skewed to polar residues; the sequence is LKATGSTHTAPTMTLTTSGTSQALSSLN. The span at 1687-1768 shows a compositional bias: low complexity; sequence TAKTSTSLHS…PEVTSTSTTS (82 aa). The segment covering 1769-1793 has biased composition (polar residues); the sequence is ITPNHTSTGTRTPVAHTTSATSSRL. The stretch at 1785–1953 is repeat 2; the sequence is TTSATSSRLP…STGTRTPVAH (169 aa). Composition is skewed to low complexity over residues 1794 to 1834 and 1891 to 1917; these read PTPF…HPHT and TAPP…TSTS. A compositionally biased stretch (polar residues) spans 1918 to 1962; the sequence is LPYHTSSTHHPEVTPTSTTNITPKHTSTGTRTPVAHTTSASSSRL. The span at 1963-1983 shows a compositional bias: low complexity; the sequence is PTPFTTHSPPTGSSPFSSTGP. The span at 2052 to 2070 shows a compositional bias: polar residues; that stretch reads LKATGSTHTAPPMTVTTSG. Low complexity predominate over residues 2090–2102; the sequence is SSSWLPQNSSSRP. Residues 2107 to 2120 are compositionally biased toward polar residues; the sequence is ITTQLPHLSSATTP. The span at 2121–2196 shows a compositional bias: low complexity; the sequence is VSTTNQLSSS…PTTASVSASP (76 aa). Residues 2240 to 2264 are compositionally biased toward polar residues; the sequence is HLASSTIAFPSTPRTTASTHTAPAF. The segment covering 2265–2278 has biased composition (low complexity); it reads SSQSTTSRSTSLTT. Polar residues predominate over residues 2323-2347; it reads LTAHGSTPASAPVSSLGTPTPTSPG. 4 disulfides stabilise this stretch: Cys-2349-Cys-2396, Cys-2363-Cys-2410, Cys-2372-Cys-2430, and Cys-2376-Cys-2432. The 90-residue stretch at 2349–2438 folds into the CTCK domain; the sequence is CSVREQQEEI…HCVCSSVACG (90 aa).

In terms of assembly, multimer; disulfide-linked. O-glycosylated. As to expression, expressed in the regenerative zone of gastric antrum, gastric body mucosa and gastric incisura mucosa. Expressed in the deeper mucous glands of gastric antrum. Overexpressed in Helicobacter pylori infected gastric epithelium. Highly expressed in duodenal Brunner's glands, gall bladder, seminal vesicle, pancreatic centroacinar cells and ducts, and periductal glands of the common bile duct.

It is found in the secreted. In terms of biological role, may provide a mechanism for modulation of the composition of the protective mucus layer related to acid secretion or the presence of bacteria and noxious agents in the lumen. Plays an important role in the cytoprotection of epithelial surfaces and are used as tumor markers in a variety of cancers. May play a role in epithelial organogenesis. The polypeptide is Mucin-6 (MUC6) (Homo sapiens (Human)).